The sequence spans 217 residues: 3,4-dihydroxy-2-butanone 4-phosphate synthase (217 aa).

D-ribulose 5-phosphate contacts are provided by residues 37 to 38 (RE), Asp42, 150 to 154 (RGGHT), and Glu174. Glu38 serves as a coordination point for Mg(2+). His153 provides a ligand contact to Mg(2+).

This sequence belongs to the DHBP synthase family. In terms of assembly, homodimer. The cofactor is Mg(2+). It depends on Mn(2+) as a cofactor.

It carries out the reaction D-ribulose 5-phosphate = (2S)-2-hydroxy-3-oxobutyl phosphate + formate + H(+). Its pathway is cofactor biosynthesis; riboflavin biosynthesis; 2-hydroxy-3-oxobutyl phosphate from D-ribulose 5-phosphate: step 1/1. In terms of biological role, catalyzes the conversion of D-ribulose 5-phosphate to formate and 3,4-dihydroxy-2-butanone 4-phosphate. The chain is 3,4-dihydroxy-2-butanone 4-phosphate synthase from Sodalis glossinidius (strain morsitans).